Consider the following 184-residue polypeptide: NADH-quinone oxidoreductase subunit B (184 aa).

Cys-37, Cys-38, Cys-103, and Cys-132 together coordinate [4Fe-4S] cluster.

This sequence belongs to the complex I 20 kDa subunit family. In terms of assembly, NDH-1 is composed of 14 different subunits. Subunits NuoB, C, D, E, F, and G constitute the peripheral sector of the complex. The cofactor is [4Fe-4S] cluster.

Its subcellular location is the cell membrane. The catalysed reaction is a quinone + NADH + 5 H(+)(in) = a quinol + NAD(+) + 4 H(+)(out). Functionally, NDH-1 shuttles electrons from NADH, via FMN and iron-sulfur (Fe-S) centers, to quinones in the respiratory chain. The immediate electron acceptor for the enzyme in this species is believed to be a menaquinone. Couples the redox reaction to proton translocation (for every two electrons transferred, four hydrogen ions are translocated across the cytoplasmic membrane), and thus conserves the redox energy in a proton gradient. This Mycobacterium sp. (strain JLS) protein is NADH-quinone oxidoreductase subunit B.